The following is a 215-amino-acid chain: 3-isopropylmalate dehydratase small subunit (215 aa).

It belongs to the LeuD family. LeuD type 1 subfamily. Heterodimer of LeuC and LeuD.

It catalyses the reaction (2R,3S)-3-isopropylmalate = (2S)-2-isopropylmalate. The protein operates within amino-acid biosynthesis; L-leucine biosynthesis; L-leucine from 3-methyl-2-oxobutanoate: step 2/4. Functionally, catalyzes the isomerization between 2-isopropylmalate and 3-isopropylmalate, via the formation of 2-isopropylmaleate. This is 3-isopropylmalate dehydratase small subunit from Xylella fastidiosa (strain M23).